The chain runs to 108 residues: Large ribosomal subunit protein uL24 (108 aa).

It belongs to the universal ribosomal protein uL24 family. In terms of assembly, part of the 50S ribosomal subunit.

Functionally, one of two assembly initiator proteins, it binds directly to the 5'-end of the 23S rRNA, where it nucleates assembly of the 50S subunit. In terms of biological role, one of the proteins that surrounds the polypeptide exit tunnel on the outside of the subunit. The protein is Large ribosomal subunit protein uL24 of Geobacter metallireducens (strain ATCC 53774 / DSM 7210 / GS-15).